We begin with the raw amino-acid sequence, 345 residues long: MATVKKDARLTSSQSLMCVGFAGIFSKTVTSPLEVVKILSQVGTFHCKRGFLHSFVLICQNEGLRAFWKGNMVSCLRLFPYSAIHLATYKNIVNLHIDELGDISQWRAIVAGGLAGISAALATYPLEVVETRLIAQNCQEPTYRGLLHSLSVIYRNEGLQALYRGFSLTVLGAVPFSVGCYAVYINLDKLWQERHVRFTSLQNFINGCLAAGVAQTLSFPFETVKKKMQAQSLVLPHCGGVDVHFNGMADCFRQVIKNKGVMALWSGLTANMVKIVPYFGLLFSCFEMCKQVCLYRNGYIISPPSYKLKPGVDQSLGPYELQEFKRYLRNRKSHKAQSSSIGNRW.

Solcar repeat units follow at residues 11–100 (TSSQ…IDEL), 104–195 (SQWR…QERH), and 199–297 (TSLQ…LYRN). 6 helical membrane-spanning segments follow: residues 16 to 36 (LMCV…LEVV), 67 to 87 (FWKG…IHLA), 109 to 129 (IVAG…LEVV), 165 to 185 (GFSL…AVYI), 204 to 224 (FING…FETV), and 261 to 281 (VMAL…YFGL).

The protein belongs to the mitochondrial carrier (TC 2.A.29) family.

The protein resides in the mitochondrion inner membrane. In Danio rerio (Zebrafish), this protein is Solute carrier family 25 member 43 (slc25a43).